The following is a 439-amino-acid chain: Taxadien-5-alpha-ol O-acetyltransferase (439 aa).

Catalysis depends on proton acceptor residues histidine 164 and aspartate 373.

The protein belongs to the plant acyltransferase family.

It catalyses the reaction taxa-4(20),11-dien-5alpha-ol + acetyl-CoA = taxa-4(20),11-dien-5alpha-yl acetate + CoA. The protein operates within alkaloid biosynthesis; taxol biosynthesis; 10-deacetyl-2-debenzoylbaccatin III from taxa-4(20),11-dien-5alpha-ol: step 1/3. This Taxus chinensis (Chinese yew) protein is Taxadien-5-alpha-ol O-acetyltransferase.